Consider the following 295-residue polypeptide: 4-diphosphocytidyl-2-C-methyl-D-erythritol kinase (295 aa).

Residue lysine 15 is part of the active site. 101–111 (PIAAGLGGGSS) contributes to the ATP binding site. Aspartate 143 is an active-site residue.

This sequence belongs to the GHMP kinase family. IspE subfamily.

It carries out the reaction 4-CDP-2-C-methyl-D-erythritol + ATP = 4-CDP-2-C-methyl-D-erythritol 2-phosphate + ADP + H(+). It functions in the pathway isoprenoid biosynthesis; isopentenyl diphosphate biosynthesis via DXP pathway; isopentenyl diphosphate from 1-deoxy-D-xylulose 5-phosphate: step 3/6. Catalyzes the phosphorylation of the position 2 hydroxy group of 4-diphosphocytidyl-2C-methyl-D-erythritol. This Caulobacter vibrioides (strain ATCC 19089 / CIP 103742 / CB 15) (Caulobacter crescentus) protein is 4-diphosphocytidyl-2-C-methyl-D-erythritol kinase.